Reading from the N-terminus, the 139-residue chain is Hydrogenase maturation factor HypA (139 aa).

2 residues coordinate Ni(2+): Met-1 and His-2. Cys-73 and Cys-76 together coordinate Zn(2+). His-98 is a binding site for Ni(2+). The Zn(2+) site is built by Cys-110 and Cys-113.

It belongs to the HypA/HybF family. In terms of assembly, monomer and homodimer. Could also form hexamers. Forms a complex with HypB.

Functionally, involved in the maturation of [NiFe] hydrogenases. Required for nickel insertion into the metal center of the hydrogenase. The chain is Hydrogenase maturation factor HypA from Thermococcus kodakarensis (strain ATCC BAA-918 / JCM 12380 / KOD1) (Pyrococcus kodakaraensis (strain KOD1)).